Here is a 211-residue protein sequence, read N- to C-terminus: Large ribosomal subunit protein uL3 (211 aa).

Residues glycine 125–glycine 148 are disordered.

This sequence belongs to the universal ribosomal protein uL3 family. In terms of assembly, part of the 50S ribosomal subunit. Forms a cluster with proteins L14 and L19. Also contacts proteins L13 and L17.

One of the primary rRNA binding proteins, it binds directly near the 3'-end of the 23S rRNA, where it nucleates assembly of the 50S subunit. This Deinococcus radiodurans (strain ATCC 13939 / DSM 20539 / JCM 16871 / CCUG 27074 / LMG 4051 / NBRC 15346 / NCIMB 9279 / VKM B-1422 / R1) protein is Large ribosomal subunit protein uL3 (rplC).